Consider the following 227-residue polypeptide: 2-heptyl-1-hydroxyquinolin-4(1H)-one methyltransferase (227 aa).

It belongs to the methyltransferase superfamily. In terms of assembly, monomer.

It is found in the cytoplasm. The catalysed reaction is 2-heptyl-1-hydroxy-4(1H)-quinolinone + S-adenosyl-L-methionine = 2-heptyl-1-methoxy-4(1H)-quinolinone + S-adenosyl-L-homocysteine + H(+). It carries out the reaction 3-bromo-2-heptyl-1-hydroxy-4(1H)-quinolinone + S-adenosyl-L-methionine = 3-bromo-2-heptyl-1-methoxy-4(1H)-quinolinone + S-adenosyl-L-homocysteine + H(+). In terms of biological role, involved in cellular response to chemical stress and may contribute to resistance toward antimicrobial natural compounds as well as drugs. Catalyzes the methylation and detoxification of the P.aeruginosa toxin 2-heptyl-1-hydroxy-4(1H)-quinolinone (HQNO) to 2-heptyl-1-methoxy-4(1H)-quinolinone (HMOQ). Can also methylate 3-bromo-2-heptyl-1-hydroxy-4(1H)-quinolinone, and shows much lower activity with 1-hydroxyquinolin-4(1H)-one, quercetin, 4-hydroxyquinolin-2(1H)-one (DHQ) and 4-hydroxyisoquinolin-1(2H)-one. In Mycobacteroides abscessus (strain ATCC 19977 / DSM 44196 / CCUG 20993 / CIP 104536 / JCM 13569 / NCTC 13031 / TMC 1543 / L948) (Mycobacterium abscessus), this protein is 2-heptyl-1-hydroxyquinolin-4(1H)-one methyltransferase.